The primary structure comprises 50 residues: uncharacterized protein (50 aa).

The interval Ser28–Asp50 is disordered. The segment covering Lys29–Asp50 has biased composition (polar residues).

This is an uncharacterized protein from Haemophilus influenzae (strain ATCC 51907 / DSM 11121 / KW20 / Rd).